We begin with the raw amino-acid sequence, 129 residues long: Glycine cleavage system H protein (129 aa).

A Lipoyl-binding domain is found at 24–106; sequence LVRIGISAFA…HGEGWLLLVK (83 aa). K65 bears the N6-lipoyllysine mark.

The protein belongs to the GcvH family. In terms of assembly, the glycine cleavage system is composed of four proteins: P, T, L and H. (R)-lipoate serves as cofactor.

Its function is as follows. The glycine cleavage system catalyzes the degradation of glycine. The H protein shuttles the methylamine group of glycine from the P protein to the T protein. The chain is Glycine cleavage system H protein from Prochlorococcus marinus (strain SARG / CCMP1375 / SS120).